The primary structure comprises 207 residues: Mediator of RNA polymerase II transcription subunit 18 (207 aa).

It belongs to the Mediator complex subunit 18 family. As to quaternary structure, component of the Mediator complex. Interacts with med17, prk1 and rbp1.

The protein resides in the nucleus. Component of the Mediator complex, a coactivator involved in the regulated transcription of nearly all RNA polymerase II-dependent genes. Mediator functions as a bridge to convey information from gene-specific regulatory proteins to the basal RNA polymerase II transcription machinery. Mediator is recruited to promoters by direct interactions with regulatory proteins and serves as a scaffold for the assembly of a functional preinitiation complex with RNA polymerase II and the general transcription factors. The protein is Mediator of RNA polymerase II transcription subunit 18 (med18) of Schizosaccharomyces pombe (strain 972 / ATCC 24843) (Fission yeast).